The sequence spans 100 residues: Small ribosomal subunit protein uS14 (100 aa).

The protein belongs to the universal ribosomal protein uS14 family. As to quaternary structure, part of the 30S ribosomal subunit. Contacts proteins S3 and S10.

In terms of biological role, binds 16S rRNA, required for the assembly of 30S particles and may also be responsible for determining the conformation of the 16S rRNA at the A site. This Prochlorococcus marinus subsp. pastoris (strain CCMP1986 / NIES-2087 / MED4) protein is Small ribosomal subunit protein uS14.